A 32-amino-acid polypeptide reads, in one-letter code: Zinc metalloproteinase carinactivase-1 catalytic subunit (32 aa).

The Peptidase M12B domain occupies Phe10–Ile32.

It belongs to the venom metalloproteinase (M12B) family. P-III subfamily. P-IIId sub-subfamily. In terms of assembly, heterodimer of a metalloproteinase subunit and a regulatory subunit comprising two disulfide-linked lectins (14 kDa and 17 kDa chains) (AC Q9PRP7 and AC Q9PRP8). It depends on Zn(2+) as a cofactor. In terms of tissue distribution, expressed by the venom gland.

The protein resides in the secreted. Its function is as follows. Calcium-dependent prothrombin (F2) activator. This protein may activate prothrombin via recognition by the regulatory subunit of the calcium ion bound conformation of its gamma-carboxyglutamic acid (GLA) domain, and the subsequent conversion of prothrombin to active thrombin is catalyzed by the catalytic subunit. The sequence is that of Zinc metalloproteinase carinactivase-1 catalytic subunit from Echis carinatus (Saw-scaled viper).